A 99-amino-acid polypeptide reads, in one-letter code: C-C motif chemokine 17 (99 aa).

A signal peptide spans 1 to 23 (MIPLKMLLLVTLLLGASLQVTHA). 2 cysteine pairs are disulfide-bonded: C33–C57 and C34–C73.

This sequence belongs to the intercrine beta (chemokine CC) family. As to expression, expressed in thymus, spleen, lymph node, lung and heart.

The protein localises to the secreted. Its function is as follows. Chemokine, which displays chemotactic activity for T lymphocytes, preferentially Th2 cells, but not monocytes or granulocytes. Therefore plays an important role in a wide range of inflammatory and immunological processes. Acts by binding to CCR4 at T-cell surface. Mediates GM-CSF/CSF2-driven pain and inflammation. In the brain, required to maintain the typical, highly branched morphology of hippocampal microglia under homeostatic conditions. May be important for the appropriate adaptation of microglial morphology and synaptic plasticity to acute lipopolysaccharide (LPS)-induced neuroinflammation. Plays a role in wound healing, mainly by inducing fibroblast migration into the wound. The protein is C-C motif chemokine 17 (CCL17) of Canis lupus familiaris (Dog).